Reading from the N-terminus, the 275-residue chain is NH(3)-dependent NAD(+) synthetase (275 aa).

46-53 (GISGGQDS) serves as a coordination point for ATP. Residue Asp52 participates in Mg(2+) binding. Residue Arg140 coordinates deamido-NAD(+). Thr160 is an ATP binding site. Position 165 (Glu165) interacts with Mg(2+). Deamido-NAD(+)-binding residues include Lys173 and Asp180. Lys189 and Thr211 together coordinate ATP. 260 to 261 (HK) is a deamido-NAD(+) binding site.

The protein belongs to the NAD synthetase family. Homodimer.

The catalysed reaction is deamido-NAD(+) + NH4(+) + ATP = AMP + diphosphate + NAD(+) + H(+). It participates in cofactor biosynthesis; NAD(+) biosynthesis; NAD(+) from deamido-NAD(+) (ammonia route): step 1/1. In terms of biological role, catalyzes the ATP-dependent amidation of deamido-NAD to form NAD. Uses ammonia as a nitrogen source. This Escherichia coli O139:H28 (strain E24377A / ETEC) protein is NH(3)-dependent NAD(+) synthetase.